Consider the following 720-residue polypeptide: Nucleoporin NUP2 (720 aa).

The interval 1–33 (MAKRVADAQIQRETYDSNESDDDVTPSTKVASS) is disordered. A phosphoserine mark is found at S17 and S20. Residues 35 to 50 (VMNRRKIAMPKRRMAF) are interaction with SRP1 NLS binding site 1. Disordered regions lie at residues 52–92 (PFGS…SNSR) and 136–278 (KSIE…VDNN). An FXF 1 repeat occupies 67–69 (FSF). A compositionally biased stretch (polar residues) spans 81 to 92 (VDNSPTTESNSR). Phosphoserine is present on S137. Residues 147–159 (NDAKPAKVEDVQK) show a composition bias toward basic and acidic residues. S165 is subject to Phosphoserine. The stretch at 189 to 192 (FSFG) is one FXFG 1 repeat. Basic and acidic residues predominate over residues 193-202 (PKKENRKKDE). S203 and S205 each carry phosphoserine. 2 FXF repeats span residues 216-218 (FKF) and 247-249 (FSF). The segment covering 243–278 (NAKPFSFSSATSTTEQTKSKNPLSLTEATKTNVDNN) has biased composition (polar residues). 3 FXFG repeats span residues 285–288 (FTFG), 302–305 (FVFG), and 318–321 (FTFG). Polar residues predominate over residues 315 to 324 (KSSFTFGSTT). Residues 315 to 604 (KSSFTFGSTT…KPINLQNGEE (290 aa)) are disordered. Residues 345–360 (SNDSNPSFSFSIPSKN) show a composition bias toward low complexity. Residues S348 and S351 each carry the phosphoserine modification. One copy of the FXF 4 repeat lies at 352–354 (FSF). T361 is modified (phosphothreonine). One copy of the FXFG 5 repeat lies at 369–372 (FSFG). Over residues 373-384 (VPNSSKNETSKP) the composition is skewed to polar residues. An FXFG 6 repeat occupies 386–389 (FSFG). Over residues 424 to 435 (TEKEKESKKDSK) the composition is skewed to basic and acidic residues. FXFG repeat units follow at residues 438–441 (FSFG), 474–477 (FSFG), 493–496 (FTFG), 511–514 (FSFG), and 524–527 (FSFG). Residues 479-495 (NTNTTKTADTKAPTFTF) are compositionally biased toward low complexity. Residues 513 to 533 (FGTSQPNNTPSFSFGKTTANL) show a composition bias toward polar residues. Over residues 534–548 (PANSSTSPAPSIPST) the composition is skewed to low complexity. The stretch at 550-552 (FKF) is one FXF 5 repeat. Polar residues predominate over residues 574 to 584 (TEATGNESQDA). S581 carries the phosphoserine modification. The RanBD1 domain occupies 583–720 (DATKVDATPE…AIEDAKKEMK (138 aa)). At T590 the chain carries Phosphothreonine.

As to quaternary structure, component of the nuclear pore complex (NPC). NPC constitutes the exclusive means of nucleocytoplasmic transport. NPCs allow the passive diffusion of ions and small molecules and the active, nuclear transport receptor-mediated bidirectional transport of macromolecules such as proteins, RNAs, ribonucleoparticles (RNPs), and ribosomal subunits across the nuclear envelope. Due to its 8-fold rotational symmetry, all subunits are present with 8 copies or multiples thereof. Binds to the nuclear basket of the NPC through NUP60 in a (GSP1, GSP2) GTPase-GTP-dependent manner. Interacts through its FG repeats with nuclear transport factors. Interacts with KAP122.

Its subcellular location is the nucleus. The protein localises to the nuclear pore complex. The protein resides in the nucleus membrane. Functions as a component of the nuclear pore complex (NPC). NPC components, collectively referred to as nucleoporins (NUPs), can play the role of both NPC structural components and of docking or interaction partners for transiently associated nuclear transport factors. Active directional transport is assured by both, a Phe-Gly (FG) repeat affinity gradient for these transport factors across the NPC and a transport cofactor concentration gradient across the nuclear envelope (GSP1 and GSP2 GTPases associated predominantly with GTP in the nucleus, with GDP in the cytoplasm). As one of the FG repeat nucleoporins NUP2 is involved in interactions with and guidance of nuclear transport receptors such as SRP1-KAP95 (importin alpha and beta) through the NPC. Like the closely related NUP1 it also plays an important role in disassembling and recycling SRP1-KAP95 to the cytoplasm after nuclear import. Upon entry of the heterotrimeric SRP1-KAP95-cargo complex in the nucleus, NUP2 binds through its N-terminus to the SRP1 nuclear localization signal (NLS) binding site, thus accelerating the release of the NLS-cargo. SRP1 in turn is released from NUP2 by binding of the GSP1-GTP associated export factor CSE1. NUP2 may also have a chromatin boundary/insulator activity through indirect interaction with genomic DNA via CSE1 and blocking of heterochromatin spreading. This chain is Nucleoporin NUP2 (NUP2), found in Saccharomyces cerevisiae (strain ATCC 204508 / S288c) (Baker's yeast).